We begin with the raw amino-acid sequence, 173 residues long: uncharacterized protein (173 aa).

Residues 49–72 form a disordered region; that stretch reads PTRSGRTSNSGNRGPVMTSTSSIN.

This is an uncharacterized protein from Human adenovirus B serotype 7 (HAdV-7).